The sequence spans 232 residues: Platelet-activating factor acetylhydrolase IB subunit alpha1 (232 aa).

The interval 1-20 (MSGEGENPASKPTPVQDVQG) is disordered. Residue serine 2 is modified to N-acetylserine. Serine 2 is modified (phosphoserine). Catalysis depends on residues serine 48, aspartate 193, and histidine 196.

Belongs to the 'GDSL' lipolytic enzyme family. Platelet-activating factor acetylhydrolase IB beta/gamma subunits subfamily. In terms of assembly, forms a catalytic dimer which is either homodimer (alpha1/alpha1 homodimer) or heterodimer with PAFAH1B2 (alpha1/alpha2 heterodimer). Component of the cytosolic (PAF-AH (I)) heterotetrameric enzyme, which is composed of PAFAH1B1 (beta), PAFAH1B2 (alpha2) and PAFAH1B3 (alpha1) subunits. The catalytic activity of the enzyme resides in the alpha1 (PAFAH1B3) and alpha2 (PAFAH1B2) subunits, whereas the beta subunit (PAFAH1B1) has regulatory activity. Trimer formation is not essential for the catalytic activity. Interacts with VLDLR; this interaction may modulate the Reelin pathway.

It is found in the cytoplasm. The catalysed reaction is a 1-O-alkyl-2-acetyl-sn-glycero-3-phosphocholine + H2O = a 1-O-alkyl-sn-glycero-3-phosphocholine + acetate + H(+). It carries out the reaction 1-O-hexadecyl-2-acetyl-sn-glycero-3-phosphocholine + H2O = 1-O-hexadecyl-sn-glycero-3-phosphocholine + acetate + H(+). It catalyses the reaction 1-O-hexadecyl-2-acetyl-sn-glycero-3-phosphate + H2O = 1-O-hexadecyl-sn-glycero-3-phosphate + acetate + H(+). With respect to regulation, beta subunit (PAFAH1B1) inhibits the acetylhydrolase activity of the alpha1/alpha1 catalytic homodimer. Functionally, alpha1 catalytic subunit of the cytosolic type I platelet-activating factor (PAF) acetylhydrolase (PAF-AH (I)) heterotetrameric enzyme that catalyzes the hydrolyze of the acetyl group at the sn-2 position of PAF and its analogs and modulates the action of PAF. The activity and substrate specificity of PAF-AH (I) are affected by its subunit composition. Both alpha1/alpha1 homodimer (PAFAH1B3/PAFAH1B3 homodimer) and alpha1/alpha2 heterodimer(PAFAH1B3/PAFAH1B2 heterodimer) hydrolyze 1-O-alkyl-2-acetyl-sn-glycero-3-phosphoric acid (AAGPA) more efficiently than PAF, but they have little hydrolytic activity towards 1-O-alkyl-2-acetyl-sn-glycero-3-phosphorylethanolamine (AAGPE). Plays an important role during the development of brain. This is Platelet-activating factor acetylhydrolase IB subunit alpha1 from Mus musculus (Mouse).